A 1464-amino-acid polypeptide reads, in one-letter code: DNA-directed RNA polymerase subunit beta' (1464 aa).

4 residues coordinate Zn(2+): cysteine 66, cysteine 68, cysteine 96, and cysteine 99. Mg(2+)-binding residues include aspartate 491, aspartate 493, and aspartate 495. Positions 838, 912, 919, and 922 each coordinate Zn(2+). Positions 1143 to 1200 (NDDDDDDYYDSDYYDYYDYSDDDDDYDDYDDYYYNYDDDENDNDNDYDYDYDYDYDYD) are enriched in acidic residues. Residues 1143–1229 (NDDDDDDYYD…YDYDYDSDSD (87 aa)) form a disordered region. Positions 1204–1219 (HNSYSHNSYSPSSNDN) are enriched in low complexity. Acidic residues predominate over residues 1220–1229 (YDYDYDSDSD).

Belongs to the RNA polymerase beta' chain family. The RNAP catalytic core consists of 2 alpha, 1 beta, 1 beta' and 1 omega subunit. When a sigma factor is associated with the core the holoenzyme is formed, which can initiate transcription. The cofactor is Mg(2+). Zn(2+) serves as cofactor.

It carries out the reaction RNA(n) + a ribonucleoside 5'-triphosphate = RNA(n+1) + diphosphate. Functionally, DNA-dependent RNA polymerase catalyzes the transcription of DNA into RNA using the four ribonucleoside triphosphates as substrates. The polypeptide is DNA-directed RNA polymerase subunit beta' (Karelsulcia muelleri (strain GWSS) (Sulcia muelleri)).